Here is a 620-residue protein sequence, read N- to C-terminus: Proline--tRNA ligase (620 aa).

Belongs to the class-II aminoacyl-tRNA synthetase family. ProS type 1 subfamily. As to quaternary structure, homodimer.

The protein localises to the cytoplasm. It catalyses the reaction tRNA(Pro) + L-proline + ATP = L-prolyl-tRNA(Pro) + AMP + diphosphate. Catalyzes the attachment of proline to tRNA(Pro) in a two-step reaction: proline is first activated by ATP to form Pro-AMP and then transferred to the acceptor end of tRNA(Pro). As ProRS can inadvertently accommodate and process non-cognate amino acids such as alanine and cysteine, to avoid such errors it has two additional distinct editing activities against alanine. One activity is designated as 'pretransfer' editing and involves the tRNA(Pro)-independent hydrolysis of activated Ala-AMP. The other activity is designated 'posttransfer' editing and involves deacylation of mischarged Ala-tRNA(Pro). The misacylated Cys-tRNA(Pro) is not edited by ProRS. The polypeptide is Proline--tRNA ligase (Streptococcus thermophilus (strain CNRZ 1066)).